The primary structure comprises 254 residues: Thiazole synthase (254 aa).

Residue Lys-96 is the Schiff-base intermediate with DXP of the active site. 1-deoxy-D-xylulose 5-phosphate-binding positions include Gly-157, 183 to 184 (AG), and 205 to 206 (NT).

It belongs to the ThiG family. In terms of assembly, homotetramer. Forms heterodimers with either ThiH or ThiS.

Its subcellular location is the cytoplasm. The enzyme catalyses [ThiS sulfur-carrier protein]-C-terminal-Gly-aminoethanethioate + 2-iminoacetate + 1-deoxy-D-xylulose 5-phosphate = [ThiS sulfur-carrier protein]-C-terminal Gly-Gly + 2-[(2R,5Z)-2-carboxy-4-methylthiazol-5(2H)-ylidene]ethyl phosphate + 2 H2O + H(+). It participates in cofactor biosynthesis; thiamine diphosphate biosynthesis. Catalyzes the rearrangement of 1-deoxy-D-xylulose 5-phosphate (DXP) to produce the thiazole phosphate moiety of thiamine. Sulfur is provided by the thiocarboxylate moiety of the carrier protein ThiS. In vitro, sulfur can be provided by H(2)S. In Bacillus velezensis (strain DSM 23117 / BGSC 10A6 / LMG 26770 / FZB42) (Bacillus amyloliquefaciens subsp. plantarum), this protein is Thiazole synthase.